Reading from the N-terminus, the 332-residue chain is D-galactose/methyl-galactoside binding periplasmic protein MglB (332 aa).

The first 23 residues, Met-1 to Ala-23, serve as a signal peptide directing secretion. Beta-D-galactose is bound by residues Asp-37 and Asn-114. Beta-D-glucose-binding residues include Asp-37 and Asn-114. Ca(2+)-binding residues include Asp-157, Asn-159, Asp-161, Lys-163, and Gln-165. 3 residues coordinate beta-D-galactose: His-175, Asp-177, and Arg-181. Beta-D-glucose is bound by residues His-175, Asp-177, and Arg-181. Position 228 (Glu-228) interacts with Ca(2+). Residues Asn-234, Asp-259, and Asn-279 each contribute to the beta-D-galactose site. Beta-D-glucose is bound by residues Asn-234, Asp-259, and Asn-279.

It belongs to the bacterial solute-binding protein 2 family. The ABC transporter complex is composed of one ATP-binding protein (MglA), two transmembrane proteins (MglC) and a solute-binding protein (MglB).

The protein localises to the periplasm. Functionally, part of the ABC transporter complex MglABC involved in galactose/methyl galactoside import. In addition, binds D-galactose and D-glucose and plays a role in the chemotaxis towards these two sugars by interacting with the Trg chemoreceptor. This is D-galactose/methyl-galactoside binding periplasmic protein MglB (mglB) from Salmonella typhimurium (strain LT2 / SGSC1412 / ATCC 700720).